A 129-amino-acid polypeptide reads, in one-letter code: Small ribosomal subunit protein uS11 (129 aa).

Belongs to the universal ribosomal protein uS11 family. Part of the 30S ribosomal subunit. Interacts with proteins S7 and S18. Binds to IF-3.

In terms of biological role, located on the platform of the 30S subunit, it bridges several disparate RNA helices of the 16S rRNA. Forms part of the Shine-Dalgarno cleft in the 70S ribosome. The protein is Small ribosomal subunit protein uS11 of Haemophilus influenzae (strain 86-028NP).